The following is a 122-amino-acid chain: Large ribosomal subunit protein uL14 (122 aa).

It belongs to the universal ribosomal protein uL14 family. In terms of assembly, part of the 50S ribosomal subunit. Forms a cluster with proteins L3 and L19. In the 70S ribosome, L14 and L19 interact and together make contacts with the 16S rRNA in bridges B5 and B8.

Binds to 23S rRNA. Forms part of two intersubunit bridges in the 70S ribosome. The sequence is that of Large ribosomal subunit protein uL14 from Chlamydia trachomatis serovar A (strain ATCC VR-571B / DSM 19440 / HAR-13).